Consider the following 664-residue polypeptide: Glycine--tRNA ligase beta subunit (664 aa).

It belongs to the class-II aminoacyl-tRNA synthetase family. Tetramer of two alpha and two beta subunits.

It is found in the cytoplasm. The catalysed reaction is tRNA(Gly) + glycine + ATP = glycyl-tRNA(Gly) + AMP + diphosphate. In Rickettsia conorii (strain ATCC VR-613 / Malish 7), this protein is Glycine--tRNA ligase beta subunit.